The chain runs to 450 residues: GSASAPSIFPLVSCENSNPTSTVAMGCLARDFLPGSITFSWKYEBLSAINSTRGFPSVLRGGKYVATSQVFLPSVDIIQGTDEHIVCKVRHSBGBKQKBVPLPVMLTLPPEVSGFIPPRDAFFGBPRKSQLICQASGFSPRQVWSLRDGKQIESGVTTNEVZAZAKZSGPTTYKVTSMLTIQEDAWLSQSVFTCKVEHRGLTFQQNASSMCTSDQPVGISIFTIPPSFASIFNTKSAKLSCLVTDLATYDSVTISWTREENGALKTHTNISESHPNGTFSAMGEATVCVEEWESGEQFTCTVTHTDLPSVLKQTISRPKGVAVHMPSVYVLPPSREQLDLRESATLSCLVTGYSPPDVFVQWVQKGQPVPPDSYVTSAPMPEPQAPGLYFAHSILTVSEEEWNAGETYTCVVAHESLPNRVTERSVDKSTGKPTLYNVSLVLSDTAGZCY.

In Canis lupus familiaris (Dog), this protein is Ig mu chain C region.